The chain runs to 295 residues: UDP-N-acetylenolpyruvoylglucosamine reductase (295 aa).

The 166-residue stretch at Lys-23–Gly-188 folds into the FAD-binding PCMH-type domain. Arg-167 is a catalytic residue. Ser-217 functions as the Proton donor in the catalytic mechanism. Residue Glu-287 is part of the active site.

This sequence belongs to the MurB family. Requires FAD as cofactor.

Its subcellular location is the cytoplasm. The catalysed reaction is UDP-N-acetyl-alpha-D-muramate + NADP(+) = UDP-N-acetyl-3-O-(1-carboxyvinyl)-alpha-D-glucosamine + NADPH + H(+). It functions in the pathway cell wall biogenesis; peptidoglycan biosynthesis. Functionally, cell wall formation. This Streptococcus pyogenes serotype M1 protein is UDP-N-acetylenolpyruvoylglucosamine reductase.